Reading from the N-terminus, the 212-residue chain is Ropporin-1 (212 aa).

One can recognise an RIIa domain in the interval 12 to 49 (PELPKMLKEFAKAAIRAQPQDLIQWGADYFEALSRGET). Ser-56 is subject to Phosphoserine. The interaction with RHPN1 stretch occupies residues 209–212 (VWLE).

It belongs to the ropporin family. As to quaternary structure, homodimer. Interacts with AKAP3. May interact with SPA17. Interacts with RHPN1. Interacts with FSCB; the interaction increases upon spermatozoa capacitation conditions. Interacts with CFAP61. Post-translationally, sumoylated, sumoylation decreases upon spermatozoa capacitation conditions.

The protein localises to the cell projection. It is found in the cilium. It localises to the flagellum. Functionally, important for male fertility. With ROPN1L, involved in fibrous sheath integrity and sperm motility, plays a role in PKA-dependent signaling processes required for spermatozoa capacitation. This Macaca fascicularis (Crab-eating macaque) protein is Ropporin-1 (ROPN1).